Here is a 113-residue protein sequence, read N- to C-terminus: Nucleoid-associated protein SYNW0027 (113 aa).

Belongs to the YbaB/EbfC family. As to quaternary structure, homodimer.

It is found in the cytoplasm. It localises to the nucleoid. In terms of biological role, binds to DNA and alters its conformation. May be involved in regulation of gene expression, nucleoid organization and DNA protection. This is Nucleoid-associated protein SYNW0027 from Parasynechococcus marenigrum (strain WH8102).